Here is a 170-residue protein sequence, read N- to C-terminus: Lipoprotein signal peptidase (170 aa).

3 consecutive transmembrane segments (helical) span residues 9-29 (FNIF…KYLV), 72-92 (IFFL…SLKE), and 96-118 (IARI…RLFR). Catalysis depends on residues aspartate 124 and aspartate 146. Residues 143–163 (NFADSYVVIGMILFLVYDFFI) traverse the membrane as a helical segment.

This sequence belongs to the peptidase A8 family.

It localises to the cell inner membrane. The catalysed reaction is Release of signal peptides from bacterial membrane prolipoproteins. Hydrolyzes -Xaa-Yaa-Zaa-|-(S,diacylglyceryl)Cys-, in which Xaa is hydrophobic (preferably Leu), and Yaa (Ala or Ser) and Zaa (Gly or Ala) have small, neutral side chains.. Its pathway is protein modification; lipoprotein biosynthesis (signal peptide cleavage). This protein specifically catalyzes the removal of signal peptides from prolipoproteins. The chain is Lipoprotein signal peptidase from Borreliella afzelii (strain PKo) (Borrelia afzelii).